Consider the following 212-residue polypeptide: Peptide methionine sulfoxide reductase MsrA (212 aa).

The active site involves C52.

It belongs to the MsrA Met sulfoxide reductase family.

The catalysed reaction is L-methionyl-[protein] + [thioredoxin]-disulfide + H2O = L-methionyl-(S)-S-oxide-[protein] + [thioredoxin]-dithiol. It catalyses the reaction [thioredoxin]-disulfide + L-methionine + H2O = L-methionine (S)-S-oxide + [thioredoxin]-dithiol. Has an important function as a repair enzyme for proteins that have been inactivated by oxidation. Catalyzes the reversible oxidation-reduction of methionine sulfoxide in proteins to methionine. This Escherichia coli O127:H6 (strain E2348/69 / EPEC) protein is Peptide methionine sulfoxide reductase MsrA.